The chain runs to 50 residues: Defensin D1 (50 aa).

4 cysteine pairs are disulfide-bonded: cysteine 3–cysteine 50, cysteine 14–cysteine 35, cysteine 20–cysteine 44, and cysteine 24–cysteine 46.

In terms of processing, contains 4 disulfide bonds.

It is found in the secreted. In terms of biological role, antimicrobial peptide active against fungi, Gram-positive and Gram-negative bacteria. Inhibits growth of hyphae in the fungi A.niger (IC(50)=3.5 ug/ml), B.sorokiniana (IC(50)=3.0 ug/ml), F.oxysporum (IC(50)=9.5 ug/ml), F.graminearum (IC(50)=6.9 ug/ml), F.culmorum (IC(50)=6.9 ug/ml) and B.cinerea (IC(50)=27.4 ug/ml). Has no effect on spore germination. Destroys spores in germinated conidia by disruption of cell walls and membranes in A.niger and B.sorokiniana. Causes vacuolization of germinated macro- and microconidia in F.oxysporum, F.graminearum and F.culmorum. Strongly inhibits growth of P.infestans on potato tubers above concentrations of 13.6 ug/ml. Inhibits growth of Gram-positive bacteria C.michiganensis and B.subtilis and of Gram-negative bacteria P.syringae, E.carotovora and E.coli. This Nigella sativa (Black cumin) protein is Defensin D1.